The following is a 203-amino-acid chain: 8-oxoguanine DNA glycosylase/AP lyase (203 aa).

Active-site residues include Lys-128 and Asp-146.

The protein belongs to the type-2 OGG1 family.

The catalysed reaction is 2'-deoxyribonucleotide-(2'-deoxyribose 5'-phosphate)-2'-deoxyribonucleotide-DNA = a 3'-end 2'-deoxyribonucleotide-(2,3-dehydro-2,3-deoxyribose 5'-phosphate)-DNA + a 5'-end 5'-phospho-2'-deoxyribonucleoside-DNA + H(+). In terms of biological role, catalyzes the excision of an oxidatively damaged form of guanine (7,8-dihydro-8-oxoguanine = 8-oxoG) from DNA. Also cleaves the DNA backbone at apurinic/apyrimidinic sites (AP sites). In Sulfolobus acidocaldarius (strain ATCC 33909 / DSM 639 / JCM 8929 / NBRC 15157 / NCIMB 11770), this protein is 8-oxoguanine DNA glycosylase/AP lyase.